A 340-amino-acid chain; its full sequence is HPr kinase/phosphorylase (340 aa).

Catalysis depends on residues H153 and K174. 168-175 (GRSGIGKS) serves as a coordination point for ATP. Position 175 (S175) interacts with Mg(2+). D192 acts as the Proton acceptor; for phosphorylation activity. Proton donor; for dephosphorylation activity in catalysis. Residues 216-225 (MEIRGLGIID) are important for the catalytic mechanism of both phosphorylation and dephosphorylation. E217 provides a ligand contact to Mg(2+). The active site involves R258. Residues 279–284 (PIYPGK) form an important for the catalytic mechanism of dephosphorylation region.

Belongs to the HPrK/P family. As to quaternary structure, homohexamer. Mg(2+) serves as cofactor.

The enzyme catalyses [HPr protein]-L-serine + ATP = [HPr protein]-O-phospho-L-serine + ADP + H(+). The catalysed reaction is [HPr protein]-O-phospho-L-serine + phosphate + H(+) = [HPr protein]-L-serine + diphosphate. Catalyzes the ATP- as well as the pyrophosphate-dependent phosphorylation of a specific serine residue in HPr, a phosphocarrier protein of the phosphoenolpyruvate-dependent sugar phosphotransferase system (PTS). HprK/P also catalyzes the pyrophosphate-producing, inorganic phosphate-dependent dephosphorylation (phosphorolysis) of seryl-phosphorylated HPr (P-Ser-HPr). This is HPr kinase/phosphorylase from Chloroherpeton thalassium (strain ATCC 35110 / GB-78).